Consider the following 60-residue polypeptide: Large ribosomal subunit protein bL32 (60 aa).

Residues 1 to 27 (MAVPRNRLSNARKNSKRAHHAKKPKSL) are disordered. A compositionally biased stretch (basic residues) spans 13 to 25 (KNSKRAHHAKKPK).

Belongs to the bacterial ribosomal protein bL32 family.

The polypeptide is Large ribosomal subunit protein bL32 (Protochlamydia amoebophila (strain UWE25)).